The chain runs to 232 residues: 2,3,4,5-tetrahydropyridine-2,6-dicarboxylate N-acetyltransferase (232 aa).

It belongs to the transferase hexapeptide repeat family. DapH subfamily.

It carries out the reaction (S)-2,3,4,5-tetrahydrodipicolinate + acetyl-CoA + H2O = L-2-acetamido-6-oxoheptanedioate + CoA. It participates in amino-acid biosynthesis; L-lysine biosynthesis via DAP pathway; LL-2,6-diaminopimelate from (S)-tetrahydrodipicolinate (acetylase route): step 1/3. Catalyzes the transfer of an acetyl group from acetyl-CoA to tetrahydrodipicolinate. The sequence is that of 2,3,4,5-tetrahydropyridine-2,6-dicarboxylate N-acetyltransferase from Kosmotoga olearia (strain ATCC BAA-1733 / DSM 21960 / TBF 19.5.1).